Consider the following 640-residue polypeptide: Probable threonine--tRNA ligase, cytoplasmic (640 aa).

One can recognise a TGS domain in the interval 1–63 (MYEVKLKVEL…LKDCKLELMT (63 aa)).

Belongs to the class-II aminoacyl-tRNA synthetase family.

It localises to the cytoplasm. The catalysed reaction is tRNA(Thr) + L-threonine + ATP = L-threonyl-tRNA(Thr) + AMP + diphosphate + H(+). The sequence is that of Probable threonine--tRNA ligase, cytoplasmic from Encephalitozoon cuniculi (strain GB-M1) (Microsporidian parasite).